Here is a 741-residue protein sequence, read N- to C-terminus: NAD(P)H-quinone oxidoreductase subunit 5, chloroplastic (741 aa).

Helical transmembrane passes span 9-29, 40-60, 89-109, 125-145, 147-167, 185-205, 221-241, 258-278, 280-300, 327-347, 354-374, 396-416, 425-445, 547-567, 602-622, and 720-740; these read WIIPFIPLPVPILLGVGLLLF, WTFLSIFLLSIVMIFSLYLSI, IDPLTSIMSILITTVGILVLI, FAYMGFFNTSMLGLVTSSNLI, VYFFWELVGMCSYLLIGFWFT, GDFGLLLGILGLYWITGSFEF, VNLLFLTLCAFLLFVGPIAKS, TPISALIHAATMVAAGIFLVA, LLPLFIVIPSIMYIISLIGII, LGYMMLALGMGSYRSALFHLI, ALLFLGSGSIIHSMEAIVGYS, TAFLVGTLSLCGIPPLACFWS, LLFSPIFAIIAYSTAGLTAFY, ILFPMLVLLLFTLFVGTIGIP, FLQNVTFSVSIALFGIFIAYC, and ISSYLFLYLSYVLIFLRILFY.

This sequence belongs to the complex I subunit 5 family. NDH is composed of at least 16 different subunits, 5 of which are encoded in the nucleus.

The protein resides in the plastid. The protein localises to the chloroplast thylakoid membrane. The catalysed reaction is a plastoquinone + NADH + (n+1) H(+)(in) = a plastoquinol + NAD(+) + n H(+)(out). It catalyses the reaction a plastoquinone + NADPH + (n+1) H(+)(in) = a plastoquinol + NADP(+) + n H(+)(out). Its function is as follows. NDH shuttles electrons from NAD(P)H:plastoquinone, via FMN and iron-sulfur (Fe-S) centers, to quinones in the photosynthetic chain and possibly in a chloroplast respiratory chain. The immediate electron acceptor for the enzyme in this species is believed to be plastoquinone. Couples the redox reaction to proton translocation, and thus conserves the redox energy in a proton gradient. This chain is NAD(P)H-quinone oxidoreductase subunit 5, chloroplastic (ndhF), found in Arabis hirsuta (Hairy rock-cress).